Here is a 162-residue protein sequence, read N- to C-terminus: MGLETEKADVQLFMDDDSYSHHSGVDYGDPEKFVDSGQDRDPHRLNSHLKVGFEDVIAEPMNMHSFDKVWICSHALFEISKYVIYKFLTVFLAIPLAFTAGILFATLSCLHIWIIMPFVKTCLMVLPSVQTIWRSVTDVIIAPLCTSIGRICSSVSLQVSHD.

Residues 1–86 lie on the Cytoplasmic side of the membrane; that stretch reads MGLETEKADV…FEISKYVIYK (86 aa). Tyr19 carries the phosphotyrosine; by SRC modification. Phosphoserine occurs at positions 20 and 23. Residue Tyr27 is modified to Phosphotyrosine; by SRC. Phosphoserine is present on Ser36. Residues 87 to 107 constitute an intramembrane region (helical); sequence FLTVFLAIPLAFTAGILFATL. Residues 108–162 lie on the Cytoplasmic side of the membrane; that stretch reads SCLHIWIIMPFVKTCLMVLPSVQTIWRSVTDVIIAPLCTSIGRICSSVSLQVSHD.

This sequence belongs to the caveolin family. Monomer or homodimer. Interacts with CAV1; the interaction forms a stable heterooligomeric complex that is required for targeting to lipid rafts and for caveolae formation. Tyrosine phosphorylated forms do not form heterooligomers with the Tyr-19-phosphorylated form existing as a monomer or dimer, and the Tyr-27-form as a monomer only. Interacts (tyrosine phosphorylated form) with the SH2 domain-containing proteins, RASA1, NCK1 and SRC. Interacts (tyrosine phosphorylated form) with INSR, the interaction (Tyr-27-phosphorylated form) is increased on insulin stimulation. Interacts (Tyr-19 phosphorylated form) with MAPK1 (phosphorylated form); the interaction, promoted by insulin, leads to nuclear location and MAPK1 activation. Interacts with STAT3; the interaction is increased on insulin-induced tyrosine phosphorylation leading to STAT activation. Phosphorylated on serine and tyrosine residues. CAV1 promotes phosphorylation on Ser-23 which then targets the complex to the plasma membrane, lipid rafts and caveolae. Phosphorylation on Ser-36 appears to modulate mitosis in endothelial cells. Phosphorylation on both Tyr-19 and Tyr-27 is required for insulin-induced 'Ser-727' phosphorylation of STAT3 and its activation. Phosphorylation on Tyr-19 is required for insulin-induced phosphorylation of MAPK1 and DNA binding of STAT3. Tyrosine phosphorylation is induced by both EGF and insulin (By. similarity).

It localises to the nucleus. The protein resides in the cytoplasm. Its subcellular location is the golgi apparatus membrane. The protein localises to the cell membrane. It is found in the membrane. It localises to the caveola. Its function is as follows. May act as a scaffolding protein within caveolar membranes. Interacts directly with G-protein alpha subunits and can functionally regulate their activity. Acts as an accessory protein in conjunction with CAV1 in targeting to lipid rafts and driving caveolae formation. The Ser-36 phosphorylated form has a role in modulating mitosis in endothelial cells. Positive regulator of cellular mitogenesis of the MAPK signaling pathway. Required for the insulin-stimulated nuclear translocation and activation of MAPK1 and STAT3, and the subsequent regulation of cell cycle progression. The protein is Caveolin-2 (CAV2) of Atelerix albiventris (Middle-African hedgehog).